Reading from the N-terminus, the 684-residue chain is Leishmanolysin-like peptidase (684 aa).

Histidine 257 contributes to the Zn(2+) binding site. Glutamate 258 is a catalytic residue. Zn(2+) contacts are provided by histidine 261 and histidine 364.

This sequence belongs to the peptidase M8 family. Requires Zn(2+) as cofactor.

Its subcellular location is the cytoplasm. Essential for the coordination of mitotic progression, and also plays a role in cell migration. The polypeptide is Leishmanolysin-like peptidase (Drosophila pseudoobscura pseudoobscura (Fruit fly)).